The following is a 423-amino-acid chain: Protein TylM3 (423 aa).

A compositionally biased stretch (low complexity) spans 1 to 21; the sequence is MNTAAGPTGTAAGGTTAPAAA. Disordered regions lie at residues 1–26 and 117–149; these read MNTAAGPTGTAAGGTTAPAAAHDLSR and GSALDAAHGNPGGPPLPGGWPHRPPDREERDDP. The span at 139–149 shows a compositional bias: basic and acidic residues; it reads RPPDREERDDP.

This sequence belongs to the cytochrome P450 family.

The protein operates within antibiotic biosynthesis; tylosin biosynthesis. Functionally, involved in the biosynthesis of the macrolide antibiotic tylosin derived from the polyketide lactone tylactone. TylM3 is required for the glycosylation of the 5-hydroxyl group of tylactone to yield 5-O-mycaminosytylactone. The chain is Protein TylM3 from Streptomyces fradiae (Streptomyces roseoflavus).